Reading from the N-terminus, the 63-residue chain is MSNFWVIALNKNWATLDQVKEAYYYDDVTKEELKEGVDNNLITPEQYQEIVGEAYTSVTLSTE.

The polypeptide is SPbeta prophage-derived uncharacterized protein YomP (yomP) (Bacillus subtilis (strain 168)).